Consider the following 343-residue polypeptide: Twinfilin (343 aa).

2 ADF-H domains span residues 11–135 (EQLA…EGYR) and 184–312 (EATV…DELH). The disordered stretch occupies residues 319-343 (RPAFAKPKGPPNRGAKRLTRPTAED).

It belongs to the actin-binding proteins ADF family. Twinfilin subfamily. As to quaternary structure, interacts with G-actin; ADP-actin form.

It is found in the cytoplasm. The protein resides in the cytoskeleton. Its subcellular location is the cell cortex. Functionally, actin-binding protein involved in motile and morphological processes. Inhibits actin polymerization, likely by sequestering G-actin. In Drosophila melanogaster (Fruit fly), this protein is Twinfilin (twf).